The chain runs to 486 residues: MTIQHKQDLAQIRAMVPEMRRVKSIHFIGIGGAGMSGIAEVLLNEGYQITGSDIAENAVTERLAQKGAKVYIGHQATNVAEASVVVVSTAINEANPEVKAAREARIPVVRRAEMLAELMRFRHGIAVAGTHGKTTTTALVTQIYSEAGLDPTFVNGGLVKSAGTNARLGSSRILIAEADESDASFLHLQPMVCIVTNIEADHMDTYGGDFETLKQTFIDFLHNLPFYGQAIVCIDDPVIRELIPRISRQVITYGFSEDADVRIENYHQEGQQGKFTVVRKDCEALDITLNIPGRHNALNAAAAIAVATEDEIGDDAILAAMIGTQGTGRRFEHLGEFETGNGNVMLVDDYGHHPTEVDVTIHAARNGWQDKRLVMIFQPHRYSRTRDLYDDFANVLEQVDVLVMLDVYAAGEKAIAGADSRSLCRTIRSRGKIDPIFVADTQQLPEVLANILQEGDLLLAQGAGDIGKVARQLAALELNISNMKAK.

129 to 135 (GTHGKTT) lines the ATP pocket.

It belongs to the MurCDEF family.

It localises to the cytoplasm. The enzyme catalyses UDP-N-acetyl-alpha-D-muramate + L-alanine + ATP = UDP-N-acetyl-alpha-D-muramoyl-L-alanine + ADP + phosphate + H(+). Its pathway is cell wall biogenesis; peptidoglycan biosynthesis. Cell wall formation. This is UDP-N-acetylmuramate--L-alanine ligase from Vibrio vulnificus (strain YJ016).